We begin with the raw amino-acid sequence, 388 residues long: S-adenosylmethionine synthase (388 aa).

ATP is bound at residue His-16. Asp-18 provides a ligand contact to Mg(2+). Glu-44 is a K(+) binding site. Positions 57 and 100 each coordinate L-methionine. The flexible loop stretch occupies residues 100–110; it reads QSPEIAQGVDR. Residues 165 to 167, Asp-240, 246 to 247, Ala-263, and Lys-267 contribute to the ATP site; these read DAK and RK. An L-methionine-binding site is contributed by Asp-240. L-methionine is bound at residue Lys-271.

It belongs to the AdoMet synthase family. In terms of assembly, homotetramer; dimer of dimers. Requires Mg(2+) as cofactor. It depends on K(+) as a cofactor.

It localises to the cytoplasm. The catalysed reaction is L-methionine + ATP + H2O = S-adenosyl-L-methionine + phosphate + diphosphate. It participates in amino-acid biosynthesis; S-adenosyl-L-methionine biosynthesis; S-adenosyl-L-methionine from L-methionine: step 1/1. In terms of biological role, catalyzes the formation of S-adenosylmethionine (AdoMet) from methionine and ATP. The overall synthetic reaction is composed of two sequential steps, AdoMet formation and the subsequent tripolyphosphate hydrolysis which occurs prior to release of AdoMet from the enzyme. The sequence is that of S-adenosylmethionine synthase from Acinetobacter baumannii (strain AYE).